The chain runs to 232 residues: Phosphoglycolate phosphatase (232 aa).

The active-site Nucleophile is Asp13. Residues Asp13, Asp15, and Asp175 each coordinate Mg(2+).

It belongs to the HAD-like hydrolase superfamily. CbbY/CbbZ/Gph/YieH family. In terms of assembly, monomer. Mg(2+) serves as cofactor. Chloride is required as a cofactor.

The catalysed reaction is 2-phosphoglycolate + H2O = glycolate + phosphate. The protein operates within organic acid metabolism; glycolate biosynthesis; glycolate from 2-phosphoglycolate: step 1/1. Functionally, specifically catalyzes the dephosphorylation of 2-phosphoglycolate. Is involved in the dissimilation of the intracellular 2-phosphoglycolate formed during the DNA repair of 3'-phosphoglycolate ends, a major class of DNA lesions induced by oxidative stress. In Yersinia pseudotuberculosis serotype I (strain IP32953), this protein is Phosphoglycolate phosphatase.